Reading from the N-terminus, the 396-residue chain is Phospholipase A1-II 4 (396 aa).

Ser-221 (acyl-ester intermediate) is an active-site residue. Residues Ser-221, Asp-282, and His-319 each act as charge relay system in the active site.

The protein belongs to the AB hydrolase superfamily. Lipase family.

The protein resides in the cytoplasm. Functionally, acylhydrolase that catalyzes the hydrolysis of phospholipids at the sn-1 position. The sequence is that of Phospholipase A1-II 4 from Oryza sativa subsp. japonica (Rice).